Here is a 447-residue protein sequence, read N- to C-terminus: MIPMVKYKDTINLYDEKGKLVEENVPLEAISPLHNPTIQKLVKDVKRTVAVNLAGIENALRTGQVGGKGCMIKGRELDLPIVENAETIAEYVEKVVRVSEDDDTSIKLINDGKQMAVQIPSKRLDVAAEYSVSVLVTAQALKEAIIRTFDVDIFDAPMVHAAVLGGYPHEVTMKGSNIAALLGSPLSLEGPGYALRNIMANHFVACTKKNVMNAVAFAAIMEQTAMFEMGDAVGLFERLHLLGLAYQGLNADNLVIDLVKANGKNGTVGTVVASVVERALEDGVIKEDKTLPSGFKLYKPVDVAKWNAYAAAGLVAAAIVNCGAARAAQNIASTILYYNDILEYETGLPGVDFGRAEGTAVGFSFFSHSIYGGGGPGIFNGNHIVTRHSKGFAIPPVAAAMCLDAGTQMFSPERTSALVGTVFSAIDEFREPLKYVIKGALEVKDKI.

Y371 is a binding site for coenzyme M. G373 contributes to the coenzyme B binding site.

The protein belongs to the methyl-coenzyme M reductase beta subunit family. In terms of assembly, MCR is a hexamer of two alpha, two beta, and two gamma chains, forming a dimer of heterotrimers. Coenzyme F430 serves as cofactor.

It is found in the cytoplasm. It carries out the reaction coenzyme B + methyl-coenzyme M = methane + coenzyme M-coenzyme B heterodisulfide. The protein operates within one-carbon metabolism; methyl-coenzyme M reduction; methane from methyl-coenzyme M: step 1/1. Functionally, component of the methyl-coenzyme M reductase (MCR) I that catalyzes the reductive cleavage of methyl-coenzyme M (CoM-S-CH3 or 2-(methylthio)ethanesulfonate) using coenzyme B (CoB or 7-mercaptoheptanoylthreonine phosphate) as reductant which results in the production of methane and the mixed heterodisulfide of CoB and CoM (CoM-S-S-CoB). This is the final step in methanogenesis. This is Methyl-coenzyme M reductase I subunit beta (mcrB) from Methanocaldococcus jannaschii (strain ATCC 43067 / DSM 2661 / JAL-1 / JCM 10045 / NBRC 100440) (Methanococcus jannaschii).